Reading from the N-terminus, the 310-residue chain is Protein translocase subunit SecF (310 aa).

The next 6 helical transmembrane spans lie at 18-38 (FFTI…YRGG), 135-155 (QAVY…AFRF), 162-182 (IVSV…VILA), 188-208 (ITIV…TIVL), 240-260 (IVTS…GGEV), and 267-287 (IMII…APLI).

This sequence belongs to the SecD/SecF family. SecF subfamily. As to quaternary structure, forms a complex with SecD. Part of the essential Sec protein translocation apparatus which comprises SecA, SecYEG and auxiliary proteins SecDF. Other proteins may also be involved.

It is found in the cell inner membrane. In terms of biological role, part of the Sec protein translocase complex. Interacts with the SecYEG preprotein conducting channel. SecDF uses the proton motive force (PMF) to complete protein translocation after the ATP-dependent function of SecA. The protein is Protein translocase subunit SecF of Endomicrobium trichonymphae.